Reading from the N-terminus, the 97-residue chain is Small ribosomal subunit protein uS19 (97 aa).

The protein belongs to the universal ribosomal protein uS19 family.

Protein S19 forms a complex with S13 that binds strongly to the 16S ribosomal RNA. The chain is Small ribosomal subunit protein uS19 from Salinibacter ruber (strain DSM 13855 / M31).